The primary structure comprises 658 residues: MPLFDLKSPYPPAGDQPQAIEALTKSLKNNNHYQTLVGVTGSGKTYTMANIIAQTNKPALIMSHNKTLCAQLYSEFKAFFPHNRVEYFISHFDYYQPESYIPRRDLFIEKDSSINDDLERLRLSATTSLLGYDDVIVIASVSANYGLGNPEEYLKVMEKIKVGEKRAYKSFLLKLVEMGYSRNEVVFDRGSFRATGECVDIFPAYNDAEFIRIEFFGDEIERIAVFDALEKNEIKRLDSVMLYAASQFAVGSERLNLAIKSIEDELALRLKFFKEQDKMLEYNRLKQRTEHDLEMISATGVCKGIENYARHFTGKAPNETPFCLFDYLGIFEREFLVIVDESHVSLPQFGGMYAGDMSRKSVLVEYGFRLPSALDNRPLKFDEFIHKNCQFLFVSATPNKLELELSKKNVAEQIIRPTGLLDPKFEVRDSDKQVQDLFDEIKLVVARGERVLITTLTKKMAEELCKYYAEWGLKARYMHSEIDAIERNHIIRSLRLKEFDILIGINLLREGLDLPEVSLVAIMDADKEGFLRSETSLIQTMGRAARNANGKVLLYAKKITQSMQKAFEITSYRRAKQEEFNKIHNITPKTVTRALEEELKLRDDEIRIAKALKKDKMPKSEREKIIKELDKKMRECTKNLDFEEAMRLRDEIAQLRTL.

The Helicase ATP-binding domain occupies 25 to 414 (KSLKNNNHYQ…LSKKNVAEQI (390 aa)). Residue 38–45 (GVTGSGKT) coordinates ATP. Residues 91–114 (HFDYYQPESYIPRRDLFIEKDSSI) carry the Beta-hairpin motif. In terms of domain architecture, Helicase C-terminal spans 433-607 (QVQDLFDEIK…ELKLRDDEIR (175 aa)). Residues 623–658 (EKIIKELDKKMRECTKNLDFEEAMRLRDEIAQLRTL) form the UVR domain.

It belongs to the UvrB family. In terms of assembly, forms a heterotetramer with UvrA during the search for lesions. Interacts with UvrC in an incision complex.

It localises to the cytoplasm. Its function is as follows. The UvrABC repair system catalyzes the recognition and processing of DNA lesions. A damage recognition complex composed of 2 UvrA and 2 UvrB subunits scans DNA for abnormalities. Upon binding of the UvrA(2)B(2) complex to a putative damaged site, the DNA wraps around one UvrB monomer. DNA wrap is dependent on ATP binding by UvrB and probably causes local melting of the DNA helix, facilitating insertion of UvrB beta-hairpin between the DNA strands. Then UvrB probes one DNA strand for the presence of a lesion. If a lesion is found the UvrA subunits dissociate and the UvrB-DNA preincision complex is formed. This complex is subsequently bound by UvrC and the second UvrB is released. If no lesion is found, the DNA wraps around the other UvrB subunit that will check the other stand for damage. This Helicobacter pylori (strain ATCC 700392 / 26695) (Campylobacter pylori) protein is UvrABC system protein B.